A 297-amino-acid chain; its full sequence is Protease HtpX homolog (297 aa).

2 helical membrane passes run 14–34 (VILLFAFFVLLVVIGAAAGYL) and 39–59 (YQLGAAFALIIGAIYAFSMIF). Histidine 143 serves as a coordination point for Zn(2+). Glutamate 144 is a catalytic residue. Position 147 (histidine 147) interacts with Zn(2+). The next 2 membrane-spanning stretches (helical) occupy residues 158–178 (IAVALASAVTLISSIGGRMMW) and 193–213 (GFGAIMLIFSILSLILAPLAA). Residue glutamate 225 participates in Zn(2+) binding.

Belongs to the peptidase M48B family. It depends on Zn(2+) as a cofactor.

It is found in the cell membrane. The protein is Protease HtpX homolog of Streptococcus equi subsp. zooepidemicus (strain MGCS10565).